A 271-amino-acid chain; its full sequence is Short-chain type dehydrogenase/reductase (271 aa).

Residue 25–49 (IVTGASRGIGREIALNMAEKGAKVV) participates in NAD(+) binding. Serine 166 lines the substrate pocket. Tyrosine 179 serves as the catalytic Proton acceptor.

It belongs to the short-chain dehydrogenases/reductases (SDR) family.

The sequence is that of Short-chain type dehydrogenase/reductase from Picea abies (Norway spruce).